The chain runs to 36 residues: Photosystem I reaction center subunit VIII (36 aa).

The chain crosses the membrane as a helical span at residues F10 to Y29.

The protein belongs to the PsaI family.

It is found in the plastid. The protein localises to the chloroplast thylakoid membrane. Functionally, may help in the organization of the PsaL subunit. The polypeptide is Photosystem I reaction center subunit VIII (Oryza nivara (Indian wild rice)).